The primary structure comprises 446 residues: Glutamyl-tRNA reductase 2 (446 aa).

Substrate is bound by residues 53-56 (TCNR), S105, 110-112 (EQQ), and Q116. C54 functions as the Nucleophile in the catalytic mechanism. An NADP(+)-binding site is contributed by 185–190 (GAGKMG). The disordered stretch occupies residues 409–446 (AAELFGIENETAGGERREGGAEGAAAAPGAGPVRSQGT). A compositionally biased stretch (low complexity) spans 431 to 440 (GAAAAPGAGP).

This sequence belongs to the glutamyl-tRNA reductase family. Homodimer.

It carries out the reaction (S)-4-amino-5-oxopentanoate + tRNA(Glu) + NADP(+) = L-glutamyl-tRNA(Glu) + NADPH + H(+). The protein operates within porphyrin-containing compound metabolism; protoporphyrin-IX biosynthesis; 5-aminolevulinate from L-glutamyl-tRNA(Glu): step 1/2. Its function is as follows. Catalyzes the NADPH-dependent reduction of glutamyl-tRNA(Glu) to glutamate 1-semialdehyde (GSA). In Anaeromyxobacter dehalogenans (strain 2CP-C), this protein is Glutamyl-tRNA reductase 2.